We begin with the raw amino-acid sequence, 322 residues long: Putative small RNA degrading nuclease 4 (322 aa).

An Exonuclease domain is found at 75–213 (MLALDCEMVL…HDAAAAMKLA (139 aa)).

It belongs to the REXO1/REXO3 family.

The protein localises to the nucleus. In terms of biological role, putative 3'-5' exonuclease degrading single-stranded small RNAs. The polypeptide is Putative small RNA degrading nuclease 4 (SDN4) (Arabidopsis thaliana (Mouse-ear cress)).